A 382-amino-acid chain; its full sequence is uncharacterized protein (382 aa).

11 helical membrane-spanning segments follow: residues 8-28 (VMLL…LNTL), 45-65 (MVSS…GYLI), 75-95 (YLAS…VGFW), 102-122 (FIAG…LMCS), 131-151 (LLAA…LLVS), 157-177 (LLHV…PLLF), 204-224 (LGVN…GLMP), 231-251 (GMAN…GILG), 274-294 (VVIL…ALFI), 325-345 (ALLL…AMLM), and 349-369 (SDNL…LMLL).

It belongs to the major facilitator superfamily. YcaD (TC 2.A.1.26) family.

It localises to the cell inner membrane. This is an uncharacterized protein from Salmonella gallinarum (strain 287/91 / NCTC 13346).